The sequence spans 80 residues: UPF0270 protein VFMJ11_0205 (80 aa).

Belongs to the UPF0270 family.

The chain is UPF0270 protein VFMJ11_0205 from Aliivibrio fischeri (strain MJ11) (Vibrio fischeri).